The primary structure comprises 380 residues: Chorismate synthase (380 aa).

The NADP(+) site is built by Arg-40 and Arg-46. Residues 128 to 130, 247 to 248, Gly-292, 307 to 311, and Arg-333 contribute to the FMN site; these read RSS, QA, and KPIPT.

The protein belongs to the chorismate synthase family. Homotetramer. FMNH2 is required as a cofactor.

It catalyses the reaction 5-O-(1-carboxyvinyl)-3-phosphoshikimate = chorismate + phosphate. It functions in the pathway metabolic intermediate biosynthesis; chorismate biosynthesis; chorismate from D-erythrose 4-phosphate and phosphoenolpyruvate: step 7/7. Its function is as follows. Catalyzes the anti-1,4-elimination of the C-3 phosphate and the C-6 proR hydrogen from 5-enolpyruvylshikimate-3-phosphate (EPSP) to yield chorismate, which is the branch point compound that serves as the starting substrate for the three terminal pathways of aromatic amino acid biosynthesis. This reaction introduces a second double bond into the aromatic ring system. The protein is Chorismate synthase of Alkaliphilus metalliredigens (strain QYMF).